The chain runs to 498 residues: MKLNKMFLVGALLSLGFASCSKEGNGPAPDSSSTADTHMSVSMSLPQHNRAGDNDYNPIGEYGGVDKINDLTVYVVGDGKIDVRKLSTADLQVNQGASTTSIVTAPFQVKSGEKTVYAIVNITPKVEAALNAATNAADLKVAYEAAYAAFSDAGSEIATLVNNQDQMIMSGKPVVQTILANVSAANASVQNKVPIIVKRAAIRASMTITQQPVNGAYEIKALRPGNVEVGIATVSDLKWAVAQYEKKYYLQQKDNALSPAASFVPASTNDYNGANGAMKHYDYSQLANRITVHQLNAPYSVTDVPNVAYKYVSETTHADNDYRKGNTTYILVKGKLKPVAAMWADGEQAAYQEGGDLFLGLVTGKFYANEANANAANPASGGAGNPRVVTYKAAAVYYYAWLNPNTLDPTTWTMSPARRNNIYNVNISKFRNIGLSGNPFVPTDPDPNNPDTPDNPDTPDPEDPDTPNPEEPLPVQKTYMVVDVTVTPWTLHNYDIEF.

The first 19 residues, 1-19 (MKLNKMFLVGALLSLGFAS), serve as a signal peptide directing secretion. A lipid anchor (N-palmitoyl cysteine) is attached at Cys20. Cys20 carries the S-diacylglycerol cysteine lipid modification. Positions 20–50 (CSKEGNGPAPDSSSTADTHMSVSMSLPQHNR) are excised as a propeptide. The interval 436–476 (SGNPFVPTDPDPNNPDTPDNPDTPDPEDPDTPNPEEPLPVQ) is disordered.

This sequence belongs to the bacteroidetes fimbrillin superfamily. FimA/Mfa1 family. In terms of assembly, structural component of the fimbrial stalk. Minor fimbriae are composed of a structural subunit, most often Mfa1, and the accessory subunits Mfa3, Mfa4 and Mfa5. Mfa1 interacts with Mfa2; this anchors the fimbrium in the membrane. Fimbrium assembly occurs by linear, head-to-tail oligomerization of fimbrial subunits. This is mediated via insertion of a C-terminal beta-strand from one subunit into a groove in the N-terminal domain of the following subunit.

The protein resides in the fimbrium. It localises to the cell outer membrane. Functionally, structural subunit of the minor fimbriae. These filamentous pili are attached to the cell surface; they mediate biofilm formation, adhesion onto host cells and onto other bacteria that are part of the oral microbiome. They play an important role in invasion of periodontal tissues and are recognized as major virulence factors. Mfa1 orthologs from different strains have highly divergent sequences, and this correlates with pathogenicity. This chain is Minor fimbrium subunit Mfa1, found in Porphyromonas gingivalis (Bacteroides gingivalis).